Reading from the N-terminus, the 299-residue chain is MKRAHPDYSSSDSELDETIEVEKESADENGNLSSALCSMSPTTSSQVLARKRRRGIIEKRRRDRINNSLSELRRLVPSAFEKQGSAKLEKAEILQMTVDHLKMLHTAGGKGYFDAHALAMDYRSLGFRECLAEVARYLSIIEGLDASDPLLVRLVSHLNNYASQREAASGAHGGLGHIPWGSAFGHHPHIAHPLLLPQNGHGNAGTAASPTEPHHQGRLASAHPEAPALRAPPSGGLGPVLPVVTSASKLSPPLLSSVASLSAFPFSFSSFHLLSPSTPTQAANLGKPYRPWGTEIGAF.

Positions 1-53 (MKRAHPDYSSSDSELDETIEVEKESADENGNLSSALCSMSPTTSSQVLARKRR) are disordered. Positions 28 to 47 (ENGNLSSALCSMSPTTSSQV) are enriched in polar residues. The tract at residues 48–117 (LARKRRRGII…GGKGYFDAHA (70 aa)) is transcriptional repression and interaction with NCOR1 and SIN3A. Residues 49 to 104 (ARKRRRGIIEKRRRDRINNSLSELRRLVPSAFEKQGSAKLEKAEILQMTVDHLKML) enclose the bHLH domain. Positions 122–158 (YRSLGFRECLAEVARYLSIIEGLDASDPLLVRLVSHL) constitute an Orange domain. The disordered stretch occupies residues 194-234 (LLLPQNGHGNAGTAASPTEPHHQGRLASAHPEAPALRAPPS). Positions 289-292 (YRPW) match the YRPW motif motif.

It belongs to the HEY family. As to quaternary structure, may self-associate. Interacts with HES1, NCOR1 and SIN3A. Interacts with GATA4, GATA6 and HDAC1 and HEYL. Interacts with CCDC89/BOIP. Expressed in somitic mesoderm, brain, central nervous system, kidney, heart, nasal epithelium, limbs, lung, muscle, ovary and testis.

It localises to the nucleus. In terms of biological role, transcriptional repressor which binds preferentially to the canonical E box sequence 5'-CACGTG-3'. Downstream effector of Notch signaling required for cardiovascular development. Specifically required for the Notch-induced endocardial epithelial to mesenchymal transition, which is itself criticial for cardiac valve and septum development. May be required in conjunction with HEY2 to specify arterial cell fate or identity. Promotes maintenance of neuronal precursor cells and glial versus neuronal fate specification. Represses transcription by the cardiac transcriptional activators GATA4 and GATA6 and by the neuronal bHLH factors ASCL1/MASH1 and NEUROD4/MATH3. This Mus musculus (Mouse) protein is Hairy/enhancer-of-split related with YRPW motif protein 1 (Hey1).